We begin with the raw amino-acid sequence, 337 residues long: Adenylosuccinate synthetase (337 aa).

Residues 12 to 18 and 42 to 44 contribute to the GTP site; these read GDEGKGK and GHT. Residue Asp-13 is the Proton acceptor of the active site. Mg(2+)-binding residues include Asp-13 and Gly-42. IMP is bound by residues 13 to 16, 40 to 43, Thr-127, Arg-141, Gln-179, Thr-194, and Arg-256; these read DEGK and NAGH. His-43 (proton donor) is an active-site residue. 252–258 provides a ligand contact to substrate; it reads TVTGRRR. GTP contacts are provided by residues Arg-258, 284–286, and 324–326; these read CLD and STG.

Belongs to the adenylosuccinate synthetase family. In terms of assembly, homodimer. It depends on Mg(2+) as a cofactor.

It localises to the cytoplasm. It catalyses the reaction IMP + L-aspartate + GTP = N(6)-(1,2-dicarboxyethyl)-AMP + GDP + phosphate + 2 H(+). It functions in the pathway purine metabolism; AMP biosynthesis via de novo pathway; AMP from IMP: step 1/2. In terms of biological role, plays an important role in the de novo pathway of purine nucleotide biosynthesis. Catalyzes the first committed step in the biosynthesis of AMP from IMP. This Methanococcus maripaludis (strain C5 / ATCC BAA-1333) protein is Adenylosuccinate synthetase.